The chain runs to 194 residues: Peptidyl-tRNA hydrolase (194 aa).

Residue tyrosine 16 coordinates tRNA. Histidine 21 acts as the Proton acceptor in catalysis. Residues phenylalanine 67, asparagine 69, and asparagine 115 each contribute to the tRNA site.

It belongs to the PTH family. In terms of assembly, monomer.

Its subcellular location is the cytoplasm. It catalyses the reaction an N-acyl-L-alpha-aminoacyl-tRNA + H2O = an N-acyl-L-amino acid + a tRNA + H(+). Hydrolyzes ribosome-free peptidyl-tRNAs (with 1 or more amino acids incorporated), which drop off the ribosome during protein synthesis, or as a result of ribosome stalling. Functionally, catalyzes the release of premature peptidyl moieties from peptidyl-tRNA molecules trapped in stalled 50S ribosomal subunits, and thus maintains levels of free tRNAs and 50S ribosomes. The protein is Peptidyl-tRNA hydrolase of Salmonella dublin (strain CT_02021853).